Reading from the N-terminus, the 413-residue chain is uncharacterized protein (413 aa).

Lys265 bears the N6-(pyridoxal phosphate)lysine mark.

Belongs to the threonine aldolase family. It depends on pyridoxal 5'-phosphate as a cofactor.

This is an uncharacterized protein from Caenorhabditis elegans.